Consider the following 317-residue polypeptide: Single myb histone 6 (317 aa).

The 61-residue stretch at 1–61 (MGAPKQRWTS…KWRNMNVIVS (61 aa)) folds into the HTH myb-type domain. Residues 28–57 (WRTILKDPEFSSTLCYRSNVDLKDKWRNMN) constitute a DNA-binding region (H-T-H motif). The H15 domain occupies 121–189 (KSHRLDNIIM…KVNRKYRIAP (69 aa)). The stretch at 244–288 (VAAARAVAEAEAIMAEAEAAAKEAEAAEAEAQAAQAFAEAAFLTL) forms a coiled coil.

It belongs to the histone H1/H5 family. SMH subfamily. In terms of assembly, forms a homodimer and heterodimers.

The protein localises to the nucleus. It localises to the chromosome. The protein resides in the nucleolus. It is found in the telomere. Its function is as follows. Binds preferentially double-stranded telomeric repeats, but may also bind to the single telomeric strand. In Zea mays (Maize), this protein is Single myb histone 6 (SMH6).